Reading from the N-terminus, the 232-residue chain is Response regulator MprA (232 aa).

Residues Arg4–Leu118 form the Response regulatory domain. Position 48 is a 4-aspartylphosphate (Asp48). A DNA-binding region (ompR/PhoB-type) is located at residues Ser131–Glu229.

In terms of processing, phosphorylated and dephosphorylated by MprB.

The protein resides in the cytoplasm. Its function is as follows. Member of the two-component regulatory system MprB/MprA which contributes to maintaining a balance among several systems involved in stress resistance and is required for establishment and maintenance of persistent infection in the host. Functions as a transcriptional regulator that recognizes a 19-bp nucleotide motif comprizing two loosely conserved 8-bp direct DNA-binding motif repeats separated by a 3-bp spacer region. The polypeptide is Response regulator MprA (mprA) (Mycobacterium ulcerans (strain Agy99)).